The following is a 142-amino-acid chain: Hemoglobin subunit alpha (142 aa).

One can recognise a Globin domain in the interval 2–142; that stretch reads VLSPADKTNV…VSTVLVSKYR (141 aa). S4 carries the phosphoserine modification. The residue at position 8 (K8) is an N6-succinyllysine. At T9 the chain carries Phosphothreonine. The residue at position 12 (K12) is an N6-succinyllysine. N6-acetyllysine; alternate is present on K17. K17 bears the N6-succinyllysine; alternate mark. Y25 is modified (phosphotyrosine). S36 carries the phosphoserine modification. K41 is subject to N6-succinyllysine. S50 carries the phosphoserine modification. H59 lines the O2 pocket. H88 serves as a coordination point for heme b. Position 103 is a phosphoserine (S103). Phosphothreonine is present on T109. Residues S125 and S132 each carry the phosphoserine modification. At T135 the chain carries Phosphothreonine. S139 carries the post-translational modification Phosphoserine.

It belongs to the globin family. As to quaternary structure, heterotetramer of two alpha chains and two beta chains. As to expression, red blood cells.

Its function is as follows. Involved in oxygen transport from the lung to the various peripheral tissues. Hemopressin acts as an antagonist peptide of the cannabinoid receptor CNR1. Hemopressin-binding efficiently blocks cannabinoid receptor CNR1 and subsequent signaling. In Antrozous pallidus (Pallid bat), this protein is Hemoglobin subunit alpha (HBA).